We begin with the raw amino-acid sequence, 277 residues long: MENTENSVDSKSIKNLEPKIIHGSESMDSGISLDNSYKMDYPEMGLCIIINNKNFHKSTGMTSRSGTDVDAANLRETFRNLKYEVRNKNDLTREEIVELMRDVSKEDHSKRSSFVCVLLSHGEEGIIFGTNGPVDLKKITNFFRGDRCRSLTGKPKLFIIQACRGTELDCGIETDSGVDDDMACHKIPVEADFLYAYSTAPGYYSWRNSKDGSWFIQSLCAMLKQYADKLEFMHILTRVNRKVATEFESFSFDATFHAKKQIPCIVSMLTKELYFYH.

At methionine 1 the chain carries N-acetylmethionine. Propeptides lie at residues 1-9 and 10-28; these read MENTENSVD and SKSI…ESMD. An N6-acetyllysine modification is found at lysine 11. Position 26 is a phosphoserine (serine 26). Active-site residues include histidine 121 and cysteine 163. At cysteine 163 the chain carries S-nitrosocysteine; in inhibited form. Arginine 207 bears the (Microbial infection) ADP-riboxanated arginine mark.

It belongs to the peptidase C14A family. As to quaternary structure, heterotetramer that consists of two anti-parallel arranged heterodimers, each one formed by a 17 kDa (p17) and a 12 kDa (p12) subunit. Interacts with BIRC6/bruce. Cleavage by granzyme B, caspase-6, caspase-8 and caspase-10 generates the two active subunits. Additional processing of the propeptides is likely due to the autocatalytic activity of the activated protease. Active heterodimers between the small subunit of caspase-7 protease and the large subunit of caspase-3 also occur and vice versa. Post-translationally, S-nitrosylated on its catalytic site cysteine in unstimulated human cell lines and denitrosylated upon activation of the Fas apoptotic pathway, associated with an increase in intracellular caspase activity. Fas therefore activates caspase-3 not only by inducing the cleavage of the caspase zymogen to its active subunits, but also by stimulating the denitrosylation of its active site thiol. In terms of processing, ubiquitinated by BIRC6; this activity is inhibited by DIABLO/SMAC. (Microbial infection) ADP-riboxanation by C.violaceum CopC blocks CASP3 processing, preventing CASP3 activation and ability to recognize and cleave substrates. Highly expressed in lung, spleen, heart, liver and kidney. Moderate levels in brain and skeletal muscle, and low in testis. Also found in many cell lines, highest expression in cells of the immune system.

The protein localises to the cytoplasm. The enzyme catalyses Strict requirement for an Asp residue at positions P1 and P4. It has a preferred cleavage sequence of Asp-Xaa-Xaa-Asp-|- with a hydrophobic amino-acid residue at P2 and a hydrophilic amino-acid residue at P3, although Val or Ala are also accepted at this position.. Its activity is regulated as follows. Inhibited by isatin sulfonamides. Inhibited by BIRC6; following inhibition of BIRC6-caspase binding by DIABLO/SMAC, BIRC6 is subjected to caspase cleavage, leading to an increase in active caspases. Functionally, thiol protease that acts as a major effector caspase involved in the execution phase of apoptosis. Following cleavage and activation by initiator caspases (CASP8, CASP9 and/or CASP10), mediates execution of apoptosis by catalyzing cleavage of many proteins. At the onset of apoptosis, it proteolytically cleaves poly(ADP-ribose) polymerase PARP1 at a '216-Asp-|-Gly-217' bond. Cleaves and activates sterol regulatory element binding proteins (SREBPs) between the basic helix-loop-helix leucine zipper domain and the membrane attachment domain. Cleaves and activates caspase-6, -7 and -9 (CASP6, CASP7 and CASP9, respectively). Cleaves and inactivates interleukin-18 (IL18). Involved in the cleavage of huntingtin. Triggers cell adhesion in sympathetic neurons through RET cleavage. Cleaves and inhibits serine/threonine-protein kinase AKT1 in response to oxidative stress. Acts as an inhibitor of type I interferon production during virus-induced apoptosis by mediating cleavage of antiviral proteins CGAS, IRF3 and MAVS, thereby preventing cytokine overproduction. Also involved in pyroptosis by mediating cleavage and activation of gasdermin-E (GSDME). Cleaves XRCC4 and phospholipid scramblase proteins XKR4, XKR8 and XKR9, leading to promote phosphatidylserine exposure on apoptotic cell surface. Cleaves BIRC6 following inhibition of BIRC6-caspase binding by DIABLO/SMAC. This Homo sapiens (Human) protein is Caspase-3 (CASP3).